The following is a 453-amino-acid chain: Serine/threonine-protein phosphatase 2A 55 kDa regulatory subunit B delta isoform (453 aa).

4 WD repeats span residues 32–71 (AEADIISTVEFNYSGDLLATGDKGGRVVIFQREQENKSRP), 97–138 (EIEE…KRAE), 181–219 (AHTYHINSISVNSDHETYLSADDLRINLWHLEITDRSFN), and 230–270 (ELTE…LCDR). Phosphoserine is present on Ser-285. 3 WD repeats span residues 289 to 327 (EIISSISDVKFSHSGRYMMTRDYLSVKVWDLNMESRPVE), 344 to 385 (ENDC…DVTL), and 420 to 452 (DFNKKILHTAWHPVDNVIAVAATNNLYIFQDKI). Tyr-305 carries the phosphotyrosine modification. Thr-308 carries the phosphothreonine modification.

Belongs to the phosphatase 2A regulatory subunit B family. As to quaternary structure, PP2A consists of a common heterodimeric core enzyme, composed of a 36 kDa catalytic subunit (subunit C) and a 65 kDa constant regulatory subunit (PR65 or subunit A), that associates with a variety of regulatory subunits. Proteins that associate with the core dimer include three families of regulatory subunits B (the R2/B/PR55/B55, R3/B''/PR72/PR130/PR59 and R5/B'/B56 families), the 48 kDa variable regulatory subunit, viral proteins, and cell signaling molecules. Interacts with ENSA (when phosphorylated at 'Ser-67') and ARPP19 (when phosphorylated at 'Ser-62'), leading to inhibit PP2A activity. Interacts with IER5.

The protein resides in the cytoplasm. Its function is as follows. Substrate-recognition subunit of protein phosphatase 2A (PP2A) that plays a key role in cell cycle by controlling mitosis entry and exit. Involved in chromosome clustering during late mitosis by mediating dephosphorylation of MKI67. The activity of PP2A complexes containing PPP2R2D (PR55-delta) fluctuate during the cell cycle: the activity is high in interphase and low in mitosis. The protein is Serine/threonine-protein phosphatase 2A 55 kDa regulatory subunit B delta isoform (PPP2R2D) of Homo sapiens (Human).